Here is a 251-residue protein sequence, read N- to C-terminus: Cell division protein ZapD (251 aa).

The protein belongs to the ZapD family. Interacts with FtsZ.

It localises to the cytoplasm. Its function is as follows. Cell division factor that enhances FtsZ-ring assembly. Directly interacts with FtsZ and promotes bundling of FtsZ protofilaments, with a reduction in FtsZ GTPase activity. This chain is Cell division protein ZapD, found in Paraburkholderia phytofirmans (strain DSM 17436 / LMG 22146 / PsJN) (Burkholderia phytofirmans).